A 490-amino-acid chain; its full sequence is Dual specificity protein kinase CLK3 (490 aa).

Residues 1-138 (MHHCKRYRSP…SKRSSRSVED (138 aa)) form a disordered region. Y7 is subject to Phosphotyrosine. Residues S9, S49, S51, S67, S76, and S78 each carry the phosphoserine modification. 2 stretches are compositionally biased toward basic and acidic residues: residues 26 to 56 (YSRE…DRLP) and 63 to 76 (ERRD…EERS). The segment covering 88–116 (RSRHRRRSRERGPYRTRKHAHHCHKRRTR) has biased composition (basic residues). Low complexity predominate over residues 117–130 (SCSSASSRSQQSSK). Position 135 is a phosphoserine (S135). The Protein kinase domain occupies 156-472 (YEIVGNLGEG…LAEALLHPFF (317 aa)). Residues 162-170 (LGEGTFGKV) and K186 each bind ATP. The Proton acceptor role is filled by D283.

The protein belongs to the protein kinase superfamily. CMGC Ser/Thr protein kinase family. Lammer subfamily. Post-translationally, autophosphorylates on all three types of residues. As to expression, endothelial cells.

The protein localises to the nucleus. The protein resides in the cytoplasm. It is found in the cytoplasmic vesicle. Its subcellular location is the secretory vesicle. It localises to the acrosome. The protein localises to the nucleus speckle. It catalyses the reaction L-seryl-[protein] + ATP = O-phospho-L-seryl-[protein] + ADP + H(+). The catalysed reaction is L-threonyl-[protein] + ATP = O-phospho-L-threonyl-[protein] + ADP + H(+). It carries out the reaction L-tyrosyl-[protein] + ATP = O-phospho-L-tyrosyl-[protein] + ADP + H(+). With respect to regulation, leucettine L41 inhibits its kinase activity and affects the regulation of alternative splicing mediated by phosphorylation of SR proteins. Its function is as follows. Dual specificity kinase acting on both serine/threonine and tyrosine-containing substrates. Phosphorylates serine- and arginine-rich (SR) proteins of the spliceosomal complex. May be a constituent of a network of regulatory mechanisms that enable SR proteins to control RNA splicing and can cause redistribution of SR proteins from speckles to a diffuse nucleoplasmic distribution. Phosphorylates SRSF1 and SRSF3. Regulates the alternative splicing of tissue factor (F3) pre-mRNA in endothelial cells. The polypeptide is Dual specificity protein kinase CLK3 (Homo sapiens (Human)).